Consider the following 166-residue polypeptide: Emerin homolog 1 (166 aa).

The region spanning 1–44 (MDVSQLTDAELRDSLKSHGVSVGPIVATTRKLYEKKLIKLSDGS) is the LEM domain. Residues 1–127 (MDVSQLTDAE…QAQSNKGGFL (127 aa)) lie on the Nuclear side of the membrane. Residues 62-99 (IISSSPKKSPPQRVFQNVSAATAAATTSPESDSDDCEE) are disordered. A helical transmembrane segment spans residues 128 to 148 (GSTITFTILFVFIAVFAYFLI). Residues 149 to 166 (ENAEQLKLVAETNPEDTI) are Perinuclear space-facing.

In terms of assembly, interacts with lmn-1 and baf-1. Ubiquitous. Expressed in all cells, except in cells undergoing spermatogenesis. High expression in hypodermis, neurons, pharyngeal muscle, body wall muscle and gonadal sheath.

The protein resides in the nucleus inner membrane. It is found in the nucleus envelope. Functionally, nuclear lamina-associated inner nuclear membrane protein that is involved in cell division, nuclear structure organization, maintenance of nuclear envelope integrity and nuclear envelope reformation after mitosis. Involved in chromosome segregation and cell division, probably via its interaction with the nuclear intermediate filament protein lmn-1, the main component of nuclear lamina. Required to organize the distribution of lmn-1, nuclear pore complexes (NPCs) and chromatin in mitotically active cells. Together with lem-2, plays a role in baf-1 enrichment at the nuclear envelope in anaphase. Together with lem-2, involved in muscle cell attachment to hypodermal cells, as well as muscle cell location and sarcomere organization. May play a role in radiation-induced DNA damage repair response. May repress binding of transcription factor pha-4 with target sequences in pharyngeal cells. The polypeptide is Emerin homolog 1 (emr-1) (Caenorhabditis elegans).